Here is a 902-residue protein sequence, read N- to C-terminus: Leucine-rich repeat-containing G-protein coupled receptor 5A (902 aa).

The N-terminal stretch at 1–22 (MDTSRTSLFLCSVLYSLQLVGS) is a signal peptide. Topologically, residues 23–557 (ARPGKQHRSC…DHLFGSWLTR (535 aa)) are extracellular. Cystine bridges form between Cys32–Cys38 and Cys36–Cys49. Residues 32–61 (CPTPCECEQDGMLVRVDCSDRGLTGLPRNI) enclose the LRRNT domain. LRR repeat units lie at residues 41–61 (DGML…PRNI), 62–85 (SIFT…ALHN), 86–109 (LHFL…AFAG), 111–133 (GSLK…ALQN), 134–157 (LRSL…SFNG), 159–181 (FSLR…ALES), 182–205 (LSAL…AFGN), 207–229 (SSLV…CFDG), 230–253 (LHSL…IKTL), 254–276 (KNLK…AFIG), 278–300 (PSLI…AFQH), 301–324 (LPEL…LTGT), 325–347 (TSLE…VCNQ), 348–372 (LPNL…GCQR), 374–393 (QKID…TFQQ), 394–417 (LVGL…SFSS), and 418–441 (LPSL…GLHG). Residues Asn60 and Asn74 are each glycosylated (N-linked (GlcNAc...) asparagine). Asn205 is a glycosylation site (N-linked (GlcNAc...) asparagine). A disulfide bond links Cys345 and Cys370. An intrachain disulfide couples Cys476 to Cys537. An N-linked (GlcNAc...) asparagine glycan is attached at Asn496. Residues 558 to 578 (IGVWLIVLLSFVCNALVIATV) form a helical membrane-spanning segment. The Cytoplasmic portion of the chain corresponds to 579 to 589 (FRPLSYVPSIK). The chain crosses the membrane as a helical span at residues 590-610 (LLIGLIAIINTLMGLSSGVLA). The LRR 18 repeat unit spans residues 598–619 (INTLMGLSSGVLATVDALTFGN). Residues 611–634 (TVDALTFGNFAQYGAWWESGVGCQ) are Extracellular-facing. An intrachain disulfide couples Cys633 to Cys708. Residues 635–655 (ITGFLSVFAAETSVFLLTVAA) traverse the membrane as a helical segment. Residues 656-678 (LERGFSIKCTTKFETKSSFLSVK) lie on the Cytoplasmic side of the membrane. The helical transmembrane segment at 679–699 (LSIVFCFLLSIIIAVSPLMSG) threads the bilayer. The Extracellular segment spans residues 700–718 (STYGTSPFCFPLLFGDPSS). Residues 719 to 739 (MVFMVALVLLNSLCFLVMTVA) traverse the membrane as a helical segment. Topologically, residues 740-763 (YTKLYCSLEKGELENVWDCSMVKH) are cytoplasmic. A helical transmembrane segment spans residues 764 to 784 (IALLLFTNCILYCPVAFLSFS). Residues 785-798 (SLLNLTFISPEVNK) are Extracellular-facing. N-linked (GlcNAc...) asparagine glycosylation is found at Asn788 and Asn797. The chain crosses the membrane as a helical span at residues 799 to 819 (SILLLIIPLPACLNPLLYILF). The Cytoplasmic portion of the chain corresponds to 820–902 (NPHFKEDIGS…LSAVAFVPCH (83 aa)).

The protein belongs to the G-protein coupled receptor 1 family. As to expression, expressed in the developing epithelial stem cells of the intestine.

Its subcellular location is the cell membrane. It is found in the golgi apparatus. It localises to the trans-Golgi network membrane. Its function is as follows. Receptor for R-spondins that potentiates the canonical Wnt signaling pathway and acts as a stem cell marker of the intestinal epithelium and the hair follicle. Upon binding to R-spondins (RSPO1, RSPO2, RSPO3 or RSPO4), associates with phosphorylated LRP6 and frizzled receptors that are activated by extracellular Wnt receptors, triggering the canonical Wnt signaling pathway to increase expression of target genes. In contrast to classical G-protein coupled receptors, does not activate heterotrimeric G-proteins to transduce the signal. Involved in the development and/or maintenance of the adult intestinal stem cells during postembryonic development. The chain is Leucine-rich repeat-containing G-protein coupled receptor 5A (lgr5-a) from Xenopus laevis (African clawed frog).